The chain runs to 239 residues: Sugar fermentation stimulation protein homolog (239 aa).

It belongs to the SfsA family.

This Rhizobium meliloti (strain 1021) (Ensifer meliloti) protein is Sugar fermentation stimulation protein homolog.